Reading from the N-terminus, the 205-residue chain is Peptidyl-tRNA hydrolase (205 aa).

Position 17 (Tyr-17) interacts with tRNA. The Proton acceptor role is filled by His-22. TRNA is bound by residues Tyr-73 and Asn-75.

It belongs to the PTH family. As to quaternary structure, monomer.

It is found in the cytoplasm. It catalyses the reaction an N-acyl-L-alpha-aminoacyl-tRNA + H2O = an N-acyl-L-amino acid + a tRNA + H(+). Its function is as follows. Hydrolyzes ribosome-free peptidyl-tRNAs (with 1 or more amino acids incorporated), which drop off the ribosome during protein synthesis, or as a result of ribosome stalling. In terms of biological role, catalyzes the release of premature peptidyl moieties from peptidyl-tRNA molecules trapped in stalled 50S ribosomal subunits, and thus maintains levels of free tRNAs and 50S ribosomes. In Maridesulfovibrio salexigens (strain ATCC 14822 / DSM 2638 / NCIMB 8403 / VKM B-1763) (Desulfovibrio salexigens), this protein is Peptidyl-tRNA hydrolase.